The chain runs to 99 residues: ATP-dependent Clp protease adapter protein ClpS (99 aa).

Belongs to the ClpS family. Binds to the N-terminal domain of the chaperone ClpA.

Its function is as follows. Involved in the modulation of the specificity of the ClpAP-mediated ATP-dependent protein degradation. The chain is ATP-dependent Clp protease adapter protein ClpS from Helicobacter hepaticus (strain ATCC 51449 / 3B1).